The chain runs to 153 residues: Nucleoside diphosphate kinase (153 aa).

A2 bears the N-acetylalanine mark. ATP-binding residues include K13, F61, R89, T95, R106, and N116. Residue H119 is the Pros-phosphohistidine intermediate of the active site. S126 carries the post-translational modification Phosphoserine.

It belongs to the NDK family. As to quaternary structure, homohexamer. Requires Mg(2+) as cofactor.

It localises to the cytoplasm. The protein localises to the cytoskeleton. The enzyme catalyses a 2'-deoxyribonucleoside 5'-diphosphate + ATP = a 2'-deoxyribonucleoside 5'-triphosphate + ADP. It catalyses the reaction a ribonucleoside 5'-diphosphate + ATP = a ribonucleoside 5'-triphosphate + ADP. In terms of biological role, major role in the synthesis of nucleoside triphosphates other than ATP. The ATP gamma phosphate is transferred to the NDP beta phosphate via a ping-pong mechanism, using a phosphorylated active-site intermediate. The polypeptide is Nucleoside diphosphate kinase (awd) (Drosophila melanogaster (Fruit fly)).